Reading from the N-terminus, the 839-residue chain is Probable alpha-glucuronidase A (839 aa).

The N-terminal stretch at 1–18 is a signal peptide; that stretch reads MRWSFLTVLLWLVSLTGA. 12 N-linked (GlcNAc...) asparagine glycosylation sites follow: Asn-49, Asn-101, Asn-148, Asn-221, Asn-278, Asn-309, Asn-342, Asn-464, Asn-526, Asn-575, Asn-681, and Asn-731.

It belongs to the glycosyl hydrolase 67 family.

Its subcellular location is the secreted. The enzyme catalyses an alpha-D-glucuronoside + H2O = D-glucuronate + an alcohol. Its function is as follows. Alpha-glucuronidase involved in the hydrolysis of xylan, a major structural heterogeneous polysaccharide found in plant biomass representing the second most abundant polysaccharide in the biosphere, after cellulose. Releases 4-O-methylglucuronic acid from xylan. This chain is Probable alpha-glucuronidase A (aguA), found in Aspergillus flavus (strain ATCC 200026 / FGSC A1120 / IAM 13836 / NRRL 3357 / JCM 12722 / SRRC 167).